A 463-amino-acid polypeptide reads, in one-letter code: Ribosomal protein uS12 methylthiotransferase RimO (463 aa).

The 116-residue stretch at 15–130 (PKVGMVSLGC…VMQVVHSHLP (116 aa)) folds into the MTTase N-terminal domain. [4Fe-4S] cluster contacts are provided by C24, C60, C89, C161, C165, and C168. Residues 147–392 (LTPRHYAYLK…MEVAEEVSAA (246 aa)) enclose the Radical SAM core domain. The 69-residue stretch at 395–463 (ERKVGKTLKV…ADGHDLWGEV (69 aa)) folds into the TRAM domain.

It belongs to the methylthiotransferase family. RimO subfamily. The cofactor is [4Fe-4S] cluster.

It is found in the cytoplasm. It catalyses the reaction L-aspartate(89)-[ribosomal protein uS12]-hydrogen + (sulfur carrier)-SH + AH2 + 2 S-adenosyl-L-methionine = 3-methylsulfanyl-L-aspartate(89)-[ribosomal protein uS12]-hydrogen + (sulfur carrier)-H + 5'-deoxyadenosine + L-methionine + A + S-adenosyl-L-homocysteine + 2 H(+). In terms of biological role, catalyzes the methylthiolation of an aspartic acid residue of ribosomal protein uS12. The sequence is that of Ribosomal protein uS12 methylthiotransferase RimO from Burkholderia thailandensis (strain ATCC 700388 / DSM 13276 / CCUG 48851 / CIP 106301 / E264).